The primary structure comprises 178 residues: ATP synthase subunit delta (178 aa).

The protein belongs to the ATPase delta chain family. In terms of assembly, F-type ATPases have 2 components, F(1) - the catalytic core - and F(0) - the membrane proton channel. F(1) has five subunits: alpha(3), beta(3), gamma(1), delta(1), epsilon(1). F(0) has three main subunits: a(1), b(2) and c(10-14). The alpha and beta chains form an alternating ring which encloses part of the gamma chain. F(1) is attached to F(0) by a central stalk formed by the gamma and epsilon chains, while a peripheral stalk is formed by the delta and b chains.

It localises to the cell membrane. In terms of biological role, f(1)F(0) ATP synthase produces ATP from ADP in the presence of a proton or sodium gradient. F-type ATPases consist of two structural domains, F(1) containing the extramembraneous catalytic core and F(0) containing the membrane proton channel, linked together by a central stalk and a peripheral stalk. During catalysis, ATP synthesis in the catalytic domain of F(1) is coupled via a rotary mechanism of the central stalk subunits to proton translocation. Its function is as follows. This protein is part of the stalk that links CF(0) to CF(1). It either transmits conformational changes from CF(0) to CF(1) or is implicated in proton conduction. The sequence is that of ATP synthase subunit delta from Streptococcus mutans serotype c (strain ATCC 700610 / UA159).